We begin with the raw amino-acid sequence, 366 residues long: L-Ala-D/L-Glu epimerase (366 aa).

Residues R24, T135, and K160 each coordinate substrate. The Proton acceptor; specific for (R)-substrate epimerization role is filled by K162. Mg(2+) contacts are provided by D191, E219, and D244. The active-site Proton acceptor; specific for (S)-substrate epimerization is the K268. Residues S296, I298, D321, and D323 each coordinate substrate.

It belongs to the mandelate racemase/muconate lactonizing enzyme family. In terms of assembly, homooctamer; tetramer of dimers. Requires Mg(2+) as cofactor.

The enzyme catalyses L-alanyl-L-glutamate = L-alanyl-D-glutamate. The protein operates within cell wall degradation; peptidoglycan degradation. Functionally, catalyzes the epimerization of L-Ala-D-Glu to L-Ala-L-Glu and has probably a role in the metabolism of the murein peptide, of which L-Ala-D-Glu is a component. Is also able to catalyze the reverse reaction and the epimerization of the other Ala-X dipeptides L-Ala-L-Asp, L-Ala-L-Leu, L-Ala-L-Met, and L-Ala-L-Ser. Is not able to epimerize other L-Ala-X dipeptides. Is also active with L-Ser-L-Glu and, oddly, L-Pro-L-Glu, but not with L-Glu-L-Glu, L-Lys-L-Glu, L-Lys-L-Ala, or D-Ala-D-Ala. In Bacillus subtilis (strain 168), this protein is L-Ala-D/L-Glu epimerase (ykfB).